We begin with the raw amino-acid sequence, 349 residues long: Sphingolipid C4-hydroxylase SUR2 (349 aa).

5 helical membrane passes run 9 to 29 (AAGSFPLAFGLKTSFGFMHYA), 50 to 70 (VLALVAPVVAYWALSGIFHVI), 99 to 119 (FLEVILQHIIQTIVGLIFMHF), 148 to 168 (IYYGYMYGMSALKIFAGFLFV), and 209 to 229 (PVEGFLLDTLGTGIAMTLTHL). The 136-residue stretch at 162–297 (FAGFLFVDTW…FTFWDNLFQT (136 aa)) folds into the Fatty acid hydroxylase domain.

It belongs to the sterol desaturase family.

It localises to the endoplasmic reticulum membrane. The catalysed reaction is sphinganine + 2 Fe(II)-[cytochrome b5] + O2 + 2 H(+) = (4R)-hydroxysphinganine + 2 Fe(III)-[cytochrome b5] + H2O. The enzyme catalyses an N-acylsphinganine + 2 Fe(II)-[cytochrome b5] + O2 + 2 H(+) = an N-acyl-(4R)-4-hydroxysphinganine + 2 Fe(III)-[cytochrome b5] + H2O. It carries out the reaction an N-acyleicosasphinganine + 2 Fe(II)-[cytochrome b5] + O2 + 2 H(+) = N-acyl-4-hydroxyeicosasphinganine + 2 Fe(III)-[cytochrome b5] + H2O. The protein operates within membrane lipid metabolism; sphingolipid biosynthesis. In terms of biological role, required for hydroxylation of C-4 in the sphingoid moiety of ceramide. Catalyzes the conversion of sphinganine to phytosphingosine in sphingolipid biosynthesis. Involved in the response to syringomycin. The polypeptide is Sphingolipid C4-hydroxylase SUR2 (SUR2) (Saccharomyces cerevisiae (strain ATCC 204508 / S288c) (Baker's yeast)).